A 513-amino-acid chain; its full sequence is ATP synthase subunit alpha 2 (513 aa).

152 to 159 (GDSKTGKT) serves as a coordination point for ATP.

This sequence belongs to the ATPase alpha/beta chains family. In terms of assembly, F-type ATPases have 2 components, CF(1) - the catalytic core - and CF(0) - the membrane proton channel. CF(1) has five subunits: alpha(3), beta(3), gamma(1), delta(1), epsilon(1). CF(0) has three main subunits: a(1), b(2) and c(9-12). The alpha and beta chains form an alternating ring which encloses part of the gamma chain. CF(1) is attached to CF(0) by a central stalk formed by the gamma and epsilon chains, while a peripheral stalk is formed by the delta and b chains.

It is found in the cell membrane. It carries out the reaction ATP + H2O + 4 H(+)(in) = ADP + phosphate + 5 H(+)(out). Produces ATP from ADP in the presence of a proton gradient across the membrane. The alpha chain is a regulatory subunit. The chain is ATP synthase subunit alpha 2 from Mycoplasmopsis pulmonis (strain UAB CTIP) (Mycoplasma pulmonis).